Reading from the N-terminus, the 194-residue chain is Large ribosomal subunit protein eL15 (194 aa).

The disordered stretch occupies residues 161 to 194 (GLTSAGKKGRGLMYKGKGAEKARPSVRANGKKTK).

It belongs to the eukaryotic ribosomal protein eL15 family.

The chain is Large ribosomal subunit protein eL15 from Methanococcus maripaludis (strain C5 / ATCC BAA-1333).